Reading from the N-terminus, the 161-residue chain is MPKEVIVESFELDHTIVKAPYVRLISEEFGPKGDVITNFDVRLVQPNQAAIETAGLHTIEHLLAKLIRQRIDGMIDCSPFGCRTGFHLIMWGKHSSTDIAKVITSSLEEIATGITWEDVPGTTIESCGNYKDHSLFAAKEWAQLILKQGISDDPFNRHVTS.

The Fe cation site is built by histidine 57, histidine 61, and cysteine 127.

Belongs to the LuxS family. As to quaternary structure, homodimer. The cofactor is Fe cation.

The catalysed reaction is S-(5-deoxy-D-ribos-5-yl)-L-homocysteine = (S)-4,5-dihydroxypentane-2,3-dione + L-homocysteine. Involved in the synthesis of autoinducer 2 (AI-2) which is secreted by bacteria and is used to communicate both the cell density and the metabolic potential of the environment. The regulation of gene expression in response to changes in cell density is called quorum sensing. Catalyzes the transformation of S-ribosylhomocysteine (RHC) to homocysteine (HC) and 4,5-dihydroxy-2,3-pentadione (DPD). The sequence is that of S-ribosylhomocysteine lyase from Streptococcus equi subsp. zooepidemicus (strain H70).